Reading from the N-terminus, the 170-residue chain is Peptide deformylase (170 aa).

Residues C91 and H133 each contribute to the Fe cation site. E134 is a catalytic residue. Residue H137 coordinates Fe cation.

The protein belongs to the polypeptide deformylase family. Fe(2+) is required as a cofactor.

It carries out the reaction N-terminal N-formyl-L-methionyl-[peptide] + H2O = N-terminal L-methionyl-[peptide] + formate. Removes the formyl group from the N-terminal Met of newly synthesized proteins. Requires at least a dipeptide for an efficient rate of reaction. N-terminal L-methionine is a prerequisite for activity but the enzyme has broad specificity at other positions. The polypeptide is Peptide deformylase (Yersinia pseudotuberculosis serotype O:1b (strain IP 31758)).